The chain runs to 340 residues: MSVFSQLAESSKQNPFSLPVRSGNCASAVSAPGQVEFGSGKYYAYCALGGVLSCGITHTAIVPLDLVKCRIQVNPEKYTGIATGFRTTIAEEGARALVKGWAPTLLGYSAQGLGKFGFYEIFKNVYADMLGEENAYLYRTSLYLAASASAEFFADILLAPMEATKVRIQTSPGAPPTLRGCAPMIYKAEGLTGFYKGLPPLWMRQIPYTMMKFACFEKTVEALYQYVVPKPRAECSKAEQLVVTFVAGYIAGVFCAIVSHPADTVVSKLNQDSQATAGGILKKLGFAGVWKGLVPRIIMIGTLTALQWFIYDSVKVALNLPRPPPPEMPASLKAKLAAQQ.

The transit peptide at 1 to 27 (MSVFSQLAESSKQNPFSLPVRSGNCAS) directs the protein to the mitochondrion. 3 Solcar repeats span residues 41-125 (KYYA…FKNV), 138-222 (YRTS…TVEA), and 239-317 (EQLV…VKVA). 6 helical membrane passes run 47 to 67 (ALGG…LDLV), 95 to 114 (RALV…QGLG), 141 to 161 (SLYL…LAPM), 200 to 220 (PLWM…EKTV), 241 to 261 (LVVT…VSHP), and 297 to 317 (IIMI…VKVA).

This sequence belongs to the mitochondrial carrier (TC 2.A.29) family.

The protein resides in the mitochondrion inner membrane. Transport of phosphate groups from the cytosol to the mitochondrial matrix. The sequence is that of Phosphate carrier protein, mitochondrial from Caenorhabditis elegans.